A 500-amino-acid chain; its full sequence is MDVFKQSEVWFVIGSQNLYGPKTLQQVMDNAHQVVNSLNNEAGLPVKLVLKPLVTTPDEITALCREANYDTACIGIMTWLHTFSPAKMWIGGLSILNKPLLQFHTQFNAQIPWKTMDMDFMNLNQTAHGGREFGFIGARMRQQHSVITGHWQDKEAHQRIGQWMRVAAAKQESQQLKVARFGDNMREVAVTEGDKVAAQIQFGYSVNAYGIGDLVAVVDAVSKGDIDTLVEEYEATYRFTDAVKLNGDKRENLLDAARIELGMTRFLEQGGFKAFTTNFENLYGLKQLPGLAVQRLMQQGYGFGGEGDWKTAALLRILKVMGTGLKGGTSFMEDYTYNFQPGNDLVVGSHMLEVCPSIAKEEKPLLDVQHLGIGGKADPARLIFSTPAGPALNASLIDMGNRFRLLVNVVDTVEQPHPLPKLPVARAIWQAQPSLATAAEAWIIAGGAHHTVFSQAVGVDELRLYAEMHGIEFLLIDNDTTLPAFKNEIRWNEVYYQLNR.

Mn(2+)-binding residues include E306, E333, H350, and H450.

Belongs to the arabinose isomerase family. Homohexamer. Mn(2+) serves as cofactor.

The enzyme catalyses beta-L-arabinopyranose = L-ribulose. It functions in the pathway carbohydrate degradation; L-arabinose degradation via L-ribulose; D-xylulose 5-phosphate from L-arabinose (bacterial route): step 1/3. Functionally, catalyzes the conversion of L-arabinose to L-ribulose. This Yersinia pestis (strain Pestoides F) protein is L-arabinose isomerase.